We begin with the raw amino-acid sequence, 238 residues long: RAD9, HUS1, RAD1-interacting nuclear orphan protein 1 (238 aa).

A compositionally biased stretch (basic residues) spans methionine 1 to proline 10. Residues methionine 1–alanine 31 form a disordered region. At serine 51 the chain carries Phosphoserine; by PLK1. Residues serine 55–phenylalanine 61 carry the RAD1-binding motif motif. Positions lysine 74 to glutamate 105 are disordered. Over residues histidine 75–arginine 84 the composition is skewed to basic residues. The D-box signature appears at arginine 125–leucine 132. A KEN box motif is present at residues glutamine 174–serine 178.

Interacts (when phosphorylated by PLK1) with POLQ; promoting POLQ recruitment to DNA damage sites. Interacts with RAD1; interaction is direct and promotes association with the 9-1-1 (RAD9-RAD1-HUS1) complex. Interacts with RAD18. Interacts with TOPBP1. Interacts with UBE2N. Phosphorylated at Ser-51 by PLK1, promoting interaction with polymerase theta (POLQ). Post-translationally, ubiquitinated and degraded by the APC/C complex upon mitotic exit. Weakly expressed in testis, prostate, ovary, thymus and small intestine. Expressed strongly in breast cancer cells.

The protein localises to the nucleus. Its subcellular location is the chromosome. Its function is as follows. Involved in microhomology-mediated end-joining (MMEJ) DNA repair by promoting recruitment of polymerase theta (POLQ) to DNA damage sites during mitosis. MMEJ is an alternative non-homologous end-joining (NHEJ) machinery that takes place during mitosis to repair double-strand breaks in DNA that originate in S-phase. Accumulates in M-phase; following phosphorylation by PLK1, interacts with POLQ, enabling its recruitment to double-strand breaks for subsequent repair. Also involved in the DNA damage response (DDR) signaling in response to genotoxic stresses such as ionizing radiation (IR) during the S phase. Recruited to sites of DNA damage through interaction with the 9-1-1 cell-cycle checkpoint response complex and TOPBP1 in a ATR-dependent manner. Required for the progression of the G1 to S phase transition. Plays a role in the stimulation of CHEK1 phosphorylation. The sequence is that of RAD9, HUS1, RAD1-interacting nuclear orphan protein 1 from Homo sapiens (Human).